The following is a 364-amino-acid chain: A-type ATP synthase subunit C (364 aa).

The protein belongs to the V-ATPase V0D/AC39 subunit family. In terms of assembly, has multiple subunits with at least A(3), B(3), C, D, E, F, H, I and proteolipid K(x).

It localises to the cell membrane. In terms of biological role, component of the A-type ATP synthase that produces ATP from ADP in the presence of a proton gradient across the membrane. This Desulfurococcus sp. (strain SY) protein is A-type ATP synthase subunit C.